A 59-amino-acid polypeptide reads, in one-letter code: LQHRTFCKLPAEPGPCKASIPAFYYNWAAKKCQLFHYGGCKGNANRFSTIEKCRHACVG.

The BPTI/Kunitz inhibitor domain occupies 7–57 (CKLPAEPGPCKASIPAFYYNWAAKKCQLFHYGGCKGNANRFSTIEKCRHAC). 3 disulfide bridges follow: C7–C57, C16–C40, and C32–C53.

Belongs to the venom Kunitz-type family. Expressed by the venom gland.

The protein localises to the secreted. In terms of biological role, serine protease inhibitor that inhibits trypsin. May also inhibit voltage-gated potassium channels (Kv). Binds transition metal ions such as copper and cobalt. This Dendroaspis polylepis polylepis (Black mamba) protein is Kunitz-type serine protease inhibitor dendrotoxin E.